The primary structure comprises 173 residues: uncharacterized protein (173 aa).

The N-acetyltransferase domain maps to 4–173; that stretch reads VKIVQVSEKD…TDFLLKKALV (170 aa). Residues 97 to 99, 106 to 110, and 136 to 138 each bind acetyl-CoA; these read IYL, RGLGK, and NEN.

This is an uncharacterized protein from Lactobacillus delbrueckii subsp. lactis.